The following is a 333-amino-acid chain: 6-phosphogluconolactonase (333 aa).

The protein belongs to the cycloisomerase 2 family.

The catalysed reaction is 6-phospho-D-glucono-1,5-lactone + H2O = 6-phospho-D-gluconate + H(+). It functions in the pathway carbohydrate degradation; pentose phosphate pathway; D-ribulose 5-phosphate from D-glucose 6-phosphate (oxidative stage): step 2/3. Functionally, catalyzes the hydrolysis of 6-phosphogluconolactone to 6-phosphogluconate. This is 6-phosphogluconolactonase from Buchnera aphidicola subsp. Schizaphis graminum (strain Sg).